Here is a 159-residue protein sequence, read N- to C-terminus: Phosphopantetheine adenylyltransferase (159 aa).

Serine 9 contacts substrate. ATP-binding positions include 9–10 (SF) and histidine 17. Substrate-binding residues include lysine 41, leucine 73, and lysine 87. ATP contacts are provided by residues 88–90 (GLR), glutamate 98, and 123–129 (YSYLSSS).

It belongs to the bacterial CoaD family. Homohexamer. Mg(2+) serves as cofactor.

Its subcellular location is the cytoplasm. It catalyses the reaction (R)-4'-phosphopantetheine + ATP + H(+) = 3'-dephospho-CoA + diphosphate. Its pathway is cofactor biosynthesis; coenzyme A biosynthesis; CoA from (R)-pantothenate: step 4/5. In terms of biological role, reversibly transfers an adenylyl group from ATP to 4'-phosphopantetheine, yielding dephospho-CoA (dPCoA) and pyrophosphate. This Clostridium botulinum (strain Alaska E43 / Type E3) protein is Phosphopantetheine adenylyltransferase.